The primary structure comprises 761 residues: Probable ubiquitin carboxyl-terminal hydrolase creB (761 aa).

A disordered region spans residues 1 to 45 (MGSFLRSFRHNGGSTAPSVGAVPAKKEPQPPPMTPLEKRLLDMGP). The span at 36 to 45 (LEKRLLDMGP) shows a compositional bias: basic and acidic residues. The 414-residue stretch at 55 to 468 (YGMENYGNTC…CAYVLFYQET (414 aa)) folds into the USP domain. Residue C64 is the Nucleophile of the active site. 2 disordered regions span residues 113 to 146 (EAEAQAEKQKAANAQRPGMPPNPQQKPEDKDSPE) and 242 to 269 (PLMEKSLPAPETADSVDQSSSTGSKTPN). Residues 256-269 (SVDQSSSTGSKTPN) show a composition bias toward polar residues. Residue H419 is the Proton acceptor of the active site. Residues 496–761 (LKQNGFPQSP…LRKKSFSILS (266 aa)) are disordered. Over residues 555 to 566 (PLSPVPPVPPIP) the composition is skewed to pro residues. Residues 577–640 (KNDALAKREE…ASKAEEDRRL (64 aa)) adopt a coiled-coil conformation. Residues 580–649 (ALAKREEKER…LSTENGKEKQ (70 aa)) are compositionally biased toward basic and acidic residues. Positions 655-666 (RLKRGSKSLSHR) are enriched in basic residues. Residues 692–710 (SQSGPTSEQQQQQRQQSPP) show a composition bias toward low complexity. Residues 712-722 (HDQPPNSPQPG) show a composition bias toward pro residues. Over residues 725–743 (TIREDEQVNHKDSKHERTG) the composition is skewed to basic and acidic residues. Residues 744–761 (HGKWRSFSLRKKSFSILS) are compositionally biased toward basic residues.

It belongs to the peptidase C19 family. In terms of assembly, interacts with creA, creC and qutD.

The catalysed reaction is Thiol-dependent hydrolysis of ester, thioester, amide, peptide and isopeptide bonds formed by the C-terminal Gly of ubiquitin (a 76-residue protein attached to proteins as an intracellular targeting signal).. Ubiquitin thioesterase component of the regulatory network controlling carbon source utilization through ubiquitination and deubiquitination involving creA, creB, creC, creD and acrB. Deubiquitinates the creA catabolic repressor and the quinate permease qutD. Also plays a role in response to carbon starvation and the control of extracellular proteases activity. The sequence is that of Probable ubiquitin carboxyl-terminal hydrolase creB (creB) from Neosartorya fischeri (strain ATCC 1020 / DSM 3700 / CBS 544.65 / FGSC A1164 / JCM 1740 / NRRL 181 / WB 181) (Aspergillus fischerianus).